The sequence spans 144 residues: Protein MIX23 (144 aa).

Residue Ala2 is modified to N-acetylalanine. Residues 82 to 120 (VKNLREEREKNLDDLTLLKQLRKEQTKLKWMQSELNVEE) are a coiled coil. Lys100 is modified (N6-acetyllysine).

The protein belongs to the MIX23 family.

This chain is Protein MIX23, found in Homo sapiens (Human).